The primary structure comprises 399 residues: Phosphoglycerate kinase (399 aa).

Substrate-binding positions include 21–23, R36, 59–62, R120, and R158; these read DFN and HLGR. Residues K209, G297, E328, and 355-358 contribute to the ATP site; that span reads GGDS.

The protein belongs to the phosphoglycerate kinase family. In terms of assembly, monomer.

It localises to the cytoplasm. It carries out the reaction (2R)-3-phosphoglycerate + ATP = (2R)-3-phospho-glyceroyl phosphate + ADP. It participates in carbohydrate degradation; glycolysis; pyruvate from D-glyceraldehyde 3-phosphate: step 2/5. The chain is Phosphoglycerate kinase from Streptococcus thermophilus (strain ATCC BAA-491 / LMD-9).